A 2336-amino-acid polypeptide reads, in one-letter code: RNA1 polyprotein (2336 aa).

Residues 599–1210 (QVARIARNIF…YLKEHGLEVL (612 aa)) are Cytoplasmic-facing. In terms of domain architecture, SF3 helicase spans 797 to 964 (MKDLLDLQQR…PGVVFDPMDC (168 aa)). Residue 827–834 (GPSHCGKS) participates in ATP binding. The chain crosses the membrane as a helical span at residues 1211 to 1231 (LLLAAMMILCVALYYFVGAFI). Residues 1232 to 1253 (GVMGGALSMGAAMAGLKEVDMK) lie on the Lumenal side of the membrane. Positions 1278-1486 (YARGELDEEV…WADNLPNPCM (209 aa)) constitute a Peptidase C3 domain. Residues histidine 1320, glutamate 1358, and cysteine 1450 each act as for picornain 3C-like protease activity in the active site. A RdRp catalytic domain is found at 1771-1899 (DRAINCDYSS…SCTDKIAIYF (129 aa)).

This sequence belongs to the nepoviruses RNA1 polyprotein family. Specific enzymatic cleavages by picornain 3C-like protease in vivo yield mature proteins. Picornain 3C-like protease is autocatalytically processed. In terms of processing, VPg is uridylylated by the polymerase and is covalently linked to the 5'-end of genomic RNA. This uridylylated form acts as a nucleotide-peptide primer for the polymerase.

The protein resides in the host endoplasmic reticulum lumen. It is found in the host endoplasmic reticulum membrane. It catalyses the reaction RNA(n) + a ribonucleoside 5'-triphosphate = RNA(n+1) + diphosphate. Its function is as follows. Picornain 3C-like protease is a thiol protease that cleaves the P1 and P2 polyproteins. The polypeptide is RNA1 polyprotein (Cycas necrotic stunt virus (CNSV)).